The primary structure comprises 178 residues: Endothelin-2 (178 aa).

The signal sequence occupies residues 1–24 (MVSVPTTWCSVALALLVALHEGKG). Positions 25 to 46 (QAAATLEQPASSSHAQGTHLRL) are excised as a propeptide. 2 cysteine pairs are disulfide-bonded: C49–C63 and C51–C59. The propeptide occupies 70–178 (VNTPEQTAPY…RSTHSRWRKR (109 aa)). An endothelin-like region spans residues 96–111 (CQCSSARDPACATFCL). The interval 159–178 (KRQQEAMREPRSTHSRWRKR) is disordered. A compositionally biased stretch (basic and acidic residues) spans 160–170 (RQQEAMREPRS).

It belongs to the endothelin/sarafotoxin family. In terms of tissue distribution, expressed in lung, but not in placental stem villi vessels or cultured placental villi smooth muscle cells.

The protein resides in the secreted. Its function is as follows. Endothelins are endothelium-derived vasoconstrictor peptides. This Homo sapiens (Human) protein is Endothelin-2 (EDN2).